A 341-amino-acid chain; its full sequence is 2-dehydro-3-deoxy-L-galactonate 5-dehydrogenase (341 aa).

Residue C37 participates in Zn(2+) binding. Residues T39 and H42 each act as charge relay system in the active site. H60, E61, C90, C93, C96, and C104 together coordinate Zn(2+).

It belongs to the zinc-containing alcohol dehydrogenase family. Zn(2+) is required as a cofactor.

It catalyses the reaction 2-dehydro-3-deoxy-L-galactonate + NAD(+) = 3-deoxy-D-glycero-2,5-hexodiulosonate + NADH + H(+). Involved in the degradation of 3,6-anhydro-L-galactose, which is the major monomeric sugar of red macroalgae. Catalyzes the third step of the pathway, the NAD(+)-dependent oxidation of 2-dehydro-3-deoxy-L-galactonate (L-KDGal) to 3-deoxy-D-glycero-2,5-hexodiulosonate (L-DDGal). In Pseudoalteromonas atlantica (strain T6c / ATCC BAA-1087), this protein is 2-dehydro-3-deoxy-L-galactonate 5-dehydrogenase.